Reading from the N-terminus, the 510-residue chain is MAFQVNTNINAMNAHVQSALTQNALKTSLERLSSGLRINKAADDASGMTVADSLRSQASSLGQAIANTNDGMGIIQVADKAMDEQLKILDTVKVKATQAAQDGQTTESRKAIQSDIVRLIQGLDNIGNTTTYNGQALLSGQFTNKEFQVGAYSNQSIKASIGSTTSDKIGQVRIATGALITASGDISLTFKQVDGVNDVTLESVKVSSSAGTGIGVLAEVINKNSNRTGVKAYASVITTSDVAVQSGSLSNLTLNGIHLGNIADIKKNDSDGRLVAAINAVTSETGVEAYTDQKGRLNLRSIDGRGIEIKTDSVSNGPSALTMVNGGQDLTKGSTNYGRLSLTRLDAKSINVVSASDSQHLGFTAIGFGESQVAETTVNLRDVTGNFNANVKSASGANYNAVIASGNQSLGSGVTTLRGAMVVIDIAESAMKMLDKVRSDLGSVQNQMISTVNNISITQVNVKAAESQIRDVDFAEESANFNKNNILAQSGSYAMSQANTVQQNILRLLT.

This sequence belongs to the bacterial flagellin family. In terms of assembly, heteromer of FlaA and FlaB. FlaB is located proximal to the hook while the remainder of the filament is composed of the predominant FlaA.

It is found in the secreted. Its subcellular location is the bacterial flagellum. Its function is as follows. Flagellin is the subunit protein which polymerizes to form the filaments of bacterial flagella. Important for motility and virulence. In Helicobacter pylori (strain ATCC 700392 / 26695) (Campylobacter pylori), this protein is Flagellin A (flaA).